The sequence spans 161 residues: Allophycocyanin beta chain (161 aa).

At N71 the chain carries N4-methylasparagine. A (2R,3E)-phycocyanobilin-binding site is contributed by C81.

It belongs to the phycobiliprotein family. Heterodimer of an alpha and a beta chain. Post-translationally, contains one covalently linked phycocyanobilin chromophore.

Its subcellular location is the cellular thylakoid membrane. Its function is as follows. Light-harvesting photosynthetic bile pigment-protein from the phycobiliprotein complex. Allophycocyanin has a maximum absorption at approximately 650 nanometers. The polypeptide is Allophycocyanin beta chain (apcB) (Anabaena variabilis).